The following is a 419-amino-acid chain: Interferon regulatory factor 3 (419 aa).

Threonine 3 carries the post-translational modification Phosphothreonine. A DNA-binding region (IRF tryptophan pentad repeat) is located at residues 5-111; that stretch reads KPRILPWLIS…DPHKIYEFVT (107 aa). At serine 14 the chain carries Phosphoserine. The residue at position 75 (threonine 75) is a Phosphothreonine. Phosphoserine is present on residues serine 97 and serine 123. Positions 118-137 are disordered; sequence PEPDTSLDLSGRYSTSDTHE. Residues 140 to 419 are mediates interaction with ZDHHC11; it reads LDKLLSGMDL…LRDLVEDMDF (280 aa). Lysine 191 participates in a covalent cross-link: Glycyl lysine isopeptide (Lys-Gly) (interchain with G-Cter in ISG15). The interaction with HERC5 stretch occupies residues 198 to 358; that stretch reads DEWEFQVTVF…SWPQDEPWVK (161 aa). 2 positions are modified to phosphothreonine: threonine 235 and threonine 251. Cysteine 265 and cysteine 287 are disulfide-bonded. Glycyl lysine isopeptide (Lys-Gly) (interchain with G-Cter in ISG15) cross-links involve residues lysine 358 and lysine 364. The residue at position 364 (lysine 364) is an N6-acetyllysine. A Phosphoserine modification is found at serine 383. Serine 384 bears the Diphosphoserine mark. Serine 384 bears the Phosphoserine; by TBK1 mark. A Phosphoserine; by IKKE modification is found at serine 394. At serine 396 the chain carries Phosphoserine. Residue threonine 402 is modified to Phosphothreonine.

It belongs to the IRF family. In terms of assembly, monomer. Homodimer; phosphorylation-induced. Interacts (when phosphorylated) with CREBBP. Interacts with MAVS (via phosphorylated pLxIS motif). Interacts with TICAM1 (via phosphorylated pLxIS motif). Interacts with STING1 (via phosphorylated pLxIS motif). Interacts with IKBKE and TBK1. Interacts with TICAM2. Interacts with RBCK1. Interacts with HERC5. Interacts with DDX3X; the interaction allows the phosphorylation and activation of IRF3 by IKBKE. Interacts with TRIM21 and ULK1, in the presence of TRIM21; this interaction leads to IRF3 degradation by autophagy. Interacts with RIOK3; RIOK3 probably mediates the interaction of TBK1 with IRF3. Interacts with ILRUN; the interaction inhibits IRF3 binding to its DNA consensus sequence. Interacts with LYAR; this interaction impairs IRF3 DNA-binding activity. Interacts with TRAF3. Interacts with ZDHHC11; ZDHHC11 recruits IRF3 to STING1 upon DNA virus infection and thereby promotes IRF3 activation. Interacts with HSP90AA1; the interaction mediates IRF3 association with TOMM70. Interacts with BCL2; the interaction decreases upon Sendai virus infection. Interacts with BAX; the interaction is direct, increases upon virus infection and mediates the formation of the apoptosis complex TOMM70:HSP90AA1:IRF3:BAX. Interacts with DDX56. Interacts with NBR1. As to quaternary structure, (Microbial infection) Interacts with Porcine epidemic diarrhea virus E protein; this interaction prevents IRF3 translocation to the nucleus and thereby prevents type I interferon production. (Microbial infection) Interacts with African swine fever virus (ASFV) P14.5/E120R; this interaction interferes with the recruitment of IRF3 to TBK1, which in turn suppresses IRF3 phosphorylation, decreasing interferon production via the cGAS/STING pathway. In terms of assembly, (Microbial infection) Interacts with African swine fever virus (ASFV) MGF360-14L; this interaction mediates degradation of IRF3 through TRIM21 and ubiquitin-meditated proteolysis. As to quaternary structure, (Microbial infection) Interacts with African swine fever virus (ASFV) E301R; this interaction inhibits nuclear translocation of IRF3 to the nucleus. (Microbial infection) Interacts with African swine fever virus (ASFV) minor capsid protein M1249L; this interaction mediates IRF3 degradation. In terms of processing, constitutively phosphorylated on many Ser/Thr residues. Activated following phosphorylation by TBK1 and IKBKE. Innate adapter proteins, such as MAVS, STING1 or TICAM1, are first activated by viral RNA, cytosolic DNA, and bacterial lipopolysaccharide (LPS), respectively, leading to activation of the kinases TBK1 and IKBKE. These kinases then phosphorylate the adapter proteins on the pLxIS motif, leading to recruitment of IRF3, thereby licensing IRF3 for phosphorylation by TBK1. Phosphorylation at Ser-384 is followed by pyrophosphorylation at the same residue, promoting phosphorylation at Ser-394. Phosphorylated IRF3 dissociates from the adapter proteins, dimerizes, and then enters the nucleus to induce IFNs. Pyrophosphorylated by UAP1 following phosphorylation at Ser-384 by TBK1. Pyrophosphorylation promotes subsequent phosphorylation at Ser-394, leading to homodimerization of IRF3. Post-translationally, acetylation at Lys-364 by KAT8 inhibits recruimtent to promoters and transcription factor activity. Acetylation by KAT8 is promoted by phosphorylation at Ser-394. In terms of processing, ubiquitinated; ubiquitination involves RBCK1 leading to proteasomal degradation. Polyubiquitinated; ubiquitination involves TRIM21 leading to proteasomal degradation. Ubiquitinated by UBE3C, leading to its degradation. Deubiquitinated by USP5 on both 'Lys-48'-linked unanchored and 'Lys-63'-linked anchored polyubiquitin, leading to inhibition of antiviral innate immunity. ISGylated by HERC5 resulting in sustained IRF3 activation and in the inhibition of IRF3 ubiquitination by disrupting PIN1 binding. The phosphorylation state of IRF3 does not alter ISGylation. Post-translationally, (Microbial infection) Phosphorylated by pseudorabies virus protein kinase UL13; leading to decreased IRF3 binding to the IRF3-responsive promoters and downstream ISG expression. In terms of processing, proteolytically cleaved by apoptotic caspases during apoptosis, leading to its inactivation. Cleavage by CASP3 during virus-induced apoptosis inactivates it, preventing cytokine overproduction.

Its subcellular location is the cytoplasm. It localises to the nucleus. The protein localises to the mitochondrion. In the absence of viral infection, maintained as a monomer in an autoinhibited state. Phosphorylation by TBK1 and IKBKE disrupts this autoinhibition leading to the liberation of the DNA-binding and dimerization activities and its nuclear localization where it can activate type I IFN and ISG genes. Phosphorylation and activation follow the following steps: innate adapter proteins, such as MAVS, STING1 or TICAM1, are first activated by viral RNA, cytosolic DNA and bacterial lipopolysaccharide (LPS), respectively, leading to activation of the kinases TBK1 and IKBKE. These kinases then phosphorylate the adapter proteins on their pLxIS motif, leading to recruitment of IRF3, thereby licensing IRF3 for phosphorylation by TBK1. Phosphorylated IRF3 dissociates from the adapter proteins, dimerizes, and then enters the nucleus to induce IFNs. Its function is as follows. Key transcriptional regulator of type I interferon (IFN)-dependent immune responses which plays a critical role in the innate immune response against DNA and RNA viruses. Regulates the transcription of type I IFN genes (IFN-alpha and IFN-beta) and IFN-stimulated genes (ISG) by binding to an interferon-stimulated response element (ISRE) in their promoters. Acts as a more potent activator of the IFN-beta (IFNB) gene than the IFN-alpha (IFNA) gene and plays a critical role in both the early and late phases of the IFNA/B gene induction. Found in an inactive form in the cytoplasm of uninfected cells and following viral infection, double-stranded RNA (dsRNA), or toll-like receptor (TLR) signaling, is phosphorylated by IKBKE and TBK1 kinases. This induces a conformational change, leading to its dimerization and nuclear localization and association with CREB binding protein (CREBBP) to form dsRNA-activated factor 1 (DRAF1), a complex which activates the transcription of the type I IFN and ISG genes. Can activate distinct gene expression programs in macrophages and can induce significant apoptosis in primary macrophages. The sequence is that of Interferon regulatory factor 3 (IRF3) from Sus scrofa (Pig).